We begin with the raw amino-acid sequence, 236 residues long: Small ribosomal subunit protein uS2c (236 aa).

Belongs to the universal ribosomal protein uS2 family.

It is found in the plastid. Its subcellular location is the chloroplast. The sequence is that of Small ribosomal subunit protein uS2c (rps2) from Platanus occidentalis (Sycamore).